The sequence spans 192 residues: Phosphoheptose isomerase (192 aa).

The SIS domain maps to 34–192 (VVDAYRAGNK…VERELFLKGN (159 aa)). 49–51 (NGG) serves as a coordination point for substrate. Residues His-58 and Glu-62 each coordinate Zn(2+). Residues Glu-62, 91–92 (ND), 117–119 (STS), Ser-122, and Gln-169 contribute to the substrate site. Zn(2+)-binding residues include Gln-169 and His-177.

This sequence belongs to the SIS family. GmhA subfamily. Homotetramer. The cofactor is Zn(2+).

The protein localises to the cytoplasm. It carries out the reaction 2 D-sedoheptulose 7-phosphate = D-glycero-alpha-D-manno-heptose 7-phosphate + D-glycero-beta-D-manno-heptose 7-phosphate. It participates in carbohydrate biosynthesis; D-glycero-D-manno-heptose 7-phosphate biosynthesis; D-glycero-alpha-D-manno-heptose 7-phosphate and D-glycero-beta-D-manno-heptose 7-phosphate from sedoheptulose 7-phosphate: step 1/1. Its function is as follows. Catalyzes the isomerization of sedoheptulose 7-phosphate in D-glycero-D-manno-heptose 7-phosphate. This chain is Phosphoheptose isomerase, found in Geobacter sp. (strain M21).